A 365-amino-acid polypeptide reads, in one-letter code: Aminomethyltransferase (365 aa).

Belongs to the GcvT family. As to quaternary structure, the glycine cleavage system is composed of four proteins: P, T, L and H.

The enzyme catalyses N(6)-[(R)-S(8)-aminomethyldihydrolipoyl]-L-lysyl-[protein] + (6S)-5,6,7,8-tetrahydrofolate = N(6)-[(R)-dihydrolipoyl]-L-lysyl-[protein] + (6R)-5,10-methylene-5,6,7,8-tetrahydrofolate + NH4(+). Functionally, the glycine cleavage system catalyzes the degradation of glycine. The chain is Aminomethyltransferase from Natranaerobius thermophilus (strain ATCC BAA-1301 / DSM 18059 / JW/NM-WN-LF).